We begin with the raw amino-acid sequence, 1181 residues long: DNA-directed RNA polymerase subunit beta' (1181 aa).

The Zn(2+) site is built by Cys-68, Cys-70, Cys-83, and Cys-86. Residues Asp-457, Asp-459, and Asp-461 each contribute to the Mg(2+) site. 4 residues coordinate Zn(2+): Cys-802, Cys-876, Cys-883, and Cys-886.

The protein belongs to the RNA polymerase beta' chain family. As to quaternary structure, the RNAP catalytic core consists of 2 alpha, 1 beta, 1 beta' and 1 omega subunit. When a sigma factor is associated with the core the holoenzyme is formed, which can initiate transcription. Requires Mg(2+) as cofactor. The cofactor is Zn(2+).

The enzyme catalyses RNA(n) + a ribonucleoside 5'-triphosphate = RNA(n+1) + diphosphate. Functionally, DNA-dependent RNA polymerase catalyzes the transcription of DNA into RNA using the four ribonucleoside triphosphates as substrates. The polypeptide is DNA-directed RNA polymerase subunit beta' (Syntrophomonas wolfei subsp. wolfei (strain DSM 2245B / Goettingen)).